The primary structure comprises 102 residues: Large ribosomal subunit protein bL21 (102 aa).

Belongs to the bacterial ribosomal protein bL21 family. As to quaternary structure, part of the 50S ribosomal subunit. Contacts protein L20.

In terms of biological role, this protein binds to 23S rRNA in the presence of protein L20. In Citrifermentans bemidjiense (strain ATCC BAA-1014 / DSM 16622 / JCM 12645 / Bem) (Geobacter bemidjiensis), this protein is Large ribosomal subunit protein bL21.